Reading from the N-terminus, the 267-residue chain is Interleukin-1 beta (267 aa).

The propeptide occupies 1–114 (MAIVPEPAKE…ETCNDDFVCD (114 aa)).

This sequence belongs to the IL-1 family. In terms of assembly, (Microbial infection) Interacts with African swine fever virus (ASFV) protein L83L. As to quaternary structure, monomer. In its precursor form, weakly interacts with full-length MEFV; the mature cytokine does not interact at all. Interacts with integrins ITGAV:ITGBV and ITGA5:ITGB1; integrin-binding is required for IL1B signaling. Interacts with cargo receptor TMED10; the interaction is direct and is required for the secretion of IL1B mature form. Interacts with HSP90AB1; the interaction facilitates cargo translocation into the ERGIC. Interacts with HSP90B1; the interaction facilitates cargo translocation into the ERGIC.

It is found in the cytoplasm. Its subcellular location is the cytosol. The protein localises to the secreted. The protein resides in the lysosome. It localises to the extracellular exosome. Its function is as follows. Potent pro-inflammatory cytokine. Initially discovered as the major endogenous pyrogen, induces prostaglandin synthesis, neutrophil influx and activation, T-cell activation and cytokine production, B-cell activation and antibody production, and fibroblast proliferation and collagen production. Promotes Th17 differentiation of T-cells. Synergizes with IL12/interleukin-12 to induce IFNG synthesis from T-helper 1 (Th1) cells. Plays a role in angiogenesis by inducing VEGF production synergistically with TNF and IL6. Involved in transduction of inflammation downstream of pyroptosis: its mature form is specifically released in the extracellular milieu by passing through the gasdermin-D (GSDMD) pore. This Sus scrofa (Pig) protein is Interleukin-1 beta (IL1B).